A 489-amino-acid polypeptide reads, in one-letter code: Palmitoyltransferase ZDHHC14 (489 aa).

Residues Met-1–Gln-60 are Cytoplasmic-facing. A helical membrane pass occupies residues Thr-61–Phe-81. The Lumenal segment spans residues Asp-82–Lys-89. The helical transmembrane segment at Ile-90 to Leu-110 threads the bilayer. The Cytoplasmic segment spans residues Arg-111–Arg-208. Residues Lys-165 to Leu-215 enclose the DHHC domain. Cys-195 (S-palmitoyl cysteine intermediate) is an active-site residue. The chain crosses the membrane as a helical span at residues Phe-209–Ile-229. Residues Thr-230–Ala-255 are Lumenal-facing. The chain crosses the membrane as a helical span at residues Val-256 to Ile-276. The Cytoplasmic segment spans residues Ser-277 to Val-489. The segment at His-434 to Ala-454 is disordered. Ser-456 bears the Phosphoserine mark.

It belongs to the DHHC palmitoyltransferase family. ERF2/ZDHHC9 subfamily.

The protein localises to the endoplasmic reticulum membrane. The protein resides in the golgi apparatus membrane. The catalysed reaction is L-cysteinyl-[protein] + hexadecanoyl-CoA = S-hexadecanoyl-L-cysteinyl-[protein] + CoA. Palmitoyltransferase that could catalyze the addition of palmitate onto various protein substrates. May have a palmitoyltransferase activity toward the beta-2 adrenergic receptor/ADRB2 and thereby regulate G protein-coupled receptor signaling. May play a role in cell differentiation and apoptosis. The chain is Palmitoyltransferase ZDHHC14 from Mus musculus (Mouse).